The following is a 325-amino-acid chain: Tetraacyldisaccharide 4'-kinase (325 aa).

Position 58–65 (58–65 (TVGGSGKT)) interacts with ATP.

Belongs to the LpxK family.

It carries out the reaction a lipid A disaccharide + ATP = a lipid IVA + ADP + H(+). It participates in glycolipid biosynthesis; lipid IV(A) biosynthesis; lipid IV(A) from (3R)-3-hydroxytetradecanoyl-[acyl-carrier-protein] and UDP-N-acetyl-alpha-D-glucosamine: step 6/6. Transfers the gamma-phosphate of ATP to the 4'-position of a tetraacyldisaccharide 1-phosphate intermediate (termed DS-1-P) to form tetraacyldisaccharide 1,4'-bis-phosphate (lipid IVA). The chain is Tetraacyldisaccharide 4'-kinase from Coxiella burnetii (strain CbuG_Q212) (Coxiella burnetii (strain Q212)).